The sequence spans 734 residues: Photosystem I P700 chlorophyll a apoprotein A2 (734 aa).

8 consecutive transmembrane segments (helical) span residues Ile46–Ala69, Leu135–Glu158, Leu175–Ile199, Ile273–Tyr291, Leu330–Tyr353, Ala369–Thr395, Ala417–His439, and Phe517–Ser535. Residues Cys559 and Cys568 each contribute to the [4Fe-4S] cluster site. A run of 2 helical transmembrane segments spans residues Ala575–Trp596 and Leu643–Ile665. Positions 654, 662, and 670 each coordinate chlorophyll a. Phylloquinone is bound at residue Trp671. Residues Leu707–Pro727 traverse the membrane as a helical segment.

It belongs to the PsaA/PsaB family. As to quaternary structure, the PsaA/B heterodimer binds the P700 chlorophyll special pair and subsequent electron acceptors. PSI consists of a core antenna complex that captures photons, and an electron transfer chain that converts photonic excitation into a charge separation. The eukaryotic PSI reaction center is composed of at least 11 subunits. The cofactor is P700 is a chlorophyll a/chlorophyll a' dimer, A0 is one or more chlorophyll a, A1 is one or both phylloquinones and FX is a shared 4Fe-4S iron-sulfur center..

The protein resides in the plastid. It localises to the chloroplast thylakoid membrane. It catalyses the reaction reduced [plastocyanin] + hnu + oxidized [2Fe-2S]-[ferredoxin] = oxidized [plastocyanin] + reduced [2Fe-2S]-[ferredoxin]. In terms of biological role, psaA and PsaB bind P700, the primary electron donor of photosystem I (PSI), as well as the electron acceptors A0, A1 and FX. PSI is a plastocyanin-ferredoxin oxidoreductase, converting photonic excitation into a charge separation, which transfers an electron from the donor P700 chlorophyll pair to the spectroscopically characterized acceptors A0, A1, FX, FA and FB in turn. Oxidized P700 is reduced on the lumenal side of the thylakoid membrane by plastocyanin. In Selaginella uncinata (Blue spike-moss), this protein is Photosystem I P700 chlorophyll a apoprotein A2.